The chain runs to 119 residues: Methylglyoxal synthase (119 aa).

The MGS-like domain occupies 1–119; that stretch reads MRIALIAHDK…GTADLIIKQF (119 aa). Residues His-8, Lys-12, 34–37, and 54–55 contribute to the substrate site; these read TGTT and SG. Asp-60 serves as the catalytic Proton donor/acceptor. His-87 lines the substrate pocket.

Belongs to the methylglyoxal synthase family.

The enzyme catalyses dihydroxyacetone phosphate = methylglyoxal + phosphate. Catalyzes the formation of methylglyoxal from dihydroxyacetone phosphate. The chain is Methylglyoxal synthase from Clostridium botulinum (strain Eklund 17B / Type B).